A 422-amino-acid chain; its full sequence is Probable ornithine aminotransferase, mitochondrial (422 aa).

Position 273 is an N6-(pyridoxal phosphate)lysine (K273).

This sequence belongs to the class-III pyridoxal-phosphate-dependent aminotransferase family. Pyridoxal 5'-phosphate serves as cofactor.

The protein resides in the mitochondrion matrix. The catalysed reaction is a 2-oxocarboxylate + L-ornithine = L-glutamate 5-semialdehyde + an L-alpha-amino acid. The protein operates within amino-acid biosynthesis; L-proline biosynthesis; L-glutamate 5-semialdehyde from L-ornithine: step 1/1. This Caenorhabditis elegans protein is Probable ornithine aminotransferase, mitochondrial.